The primary structure comprises 447 residues: Chitobiosyldiphosphodolichol beta-mannosyltransferase (447 aa).

Over 1-8 (MSVFGFDN) the chain is Lumenal. Residues 9-29 (IPTWLWWLLAIYLATPFVLYV) form a helical membrane-spanning segment. Residues 30 to 127 (VQPYLFYEGK…LCSMFWKLRA (98 aa)) are Cytoplasmic-facing. The segment at residues 128–148 (VDYILLQNPPTIPILPIAVVV) is an intramembrane region (helical). At 149 to 447 (KTFSRAKLII…ALSELKIIHK (299 aa)) the chain is on the lumenal side.

It belongs to the glycosyltransferase group 1 family.

Its subcellular location is the endoplasmic reticulum membrane. It catalyses the reaction an N,N'-diacetylchitobiosyl-diphospho-di-trans,poly-cis-dolichol + GDP-alpha-D-mannose = a beta-D-Man-(1-&gt;4)-beta-D-GlcNAc-(1-&gt;4)-alpha-D-GlcNAc-diphospho-di-trans,poly-cis-dolichol + GDP + H(+). It participates in protein modification; protein glycosylation. Participates in the formation of the lipid-linked precursor oligosaccharide for N-glycosylation. Involved in assembling the dolichol-pyrophosphate-GlcNAc(2)-Man(5) intermediate on the cytoplasmic surface of the ER. In Kluyveromyces lactis (strain ATCC 8585 / CBS 2359 / DSM 70799 / NBRC 1267 / NRRL Y-1140 / WM37) (Yeast), this protein is Chitobiosyldiphosphodolichol beta-mannosyltransferase (ALG1).